The primary structure comprises 606 residues: Aspartate--tRNA(Asp/Asn) ligase (606 aa).

E172 lines the L-aspartate pocket. Residues 196 to 199 are aspartate; that stretch reads QLFK. R218 is an L-aspartate binding site. ATP-binding positions include 218-220 and Q227; that span reads RDE. H448 lines the L-aspartate pocket. An ATP-binding site is contributed by E482. L-aspartate is bound at residue R489. An ATP-binding site is contributed by 534 to 537; it reads GWDR.

This sequence belongs to the class-II aminoacyl-tRNA synthetase family. Type 1 subfamily. Homodimer.

It is found in the cytoplasm. The enzyme catalyses tRNA(Asx) + L-aspartate + ATP = L-aspartyl-tRNA(Asx) + AMP + diphosphate. Functionally, aspartyl-tRNA synthetase with relaxed tRNA specificity since it is able to aspartylate not only its cognate tRNA(Asp) but also tRNA(Asn). Reaction proceeds in two steps: L-aspartate is first activated by ATP to form Asp-AMP and then transferred to the acceptor end of tRNA(Asp/Asn). This chain is Aspartate--tRNA(Asp/Asn) ligase, found in Saccharopolyspora erythraea (strain ATCC 11635 / DSM 40517 / JCM 4748 / NBRC 13426 / NCIMB 8594 / NRRL 2338).